We begin with the raw amino-acid sequence, 476 residues long: Chromosomal replication initiator protein DnaA (476 aa).

Residues 1-87 (MSESSHVGLW…LMYNVLVDKS (87 aa)) are domain I, interacts with DnaA modulators. The tract at residues 87–130 (SSGATVNQESTTRSTAIPQSGLPRVDERKAPGLLRAPAVQDLDP) is domain II. The domain III, AAA+ region stretch occupies residues 131 to 348 (HLNPNYNFET…GIVISIMAHS (218 aa)). Positions 176, 178, 179, and 180 each coordinate ATP. Residues 349–476 (TIYNKEIDLD…KKRNVSNGER (128 aa)) are domain IV, binds dsDNA.

It belongs to the DnaA family. As to quaternary structure, oligomerizes as a right-handed, spiral filament on DNA at oriC.

The protein localises to the cytoplasm. Plays an essential role in the initiation and regulation of chromosomal replication. ATP-DnaA binds to the origin of replication (oriC) to initiate formation of the DNA replication initiation complex once per cell cycle. Binds the DnaA box (a 9 base pair repeat at the origin) and separates the double-stranded (ds)DNA. Forms a right-handed helical filament on oriC DNA; dsDNA binds to the exterior of the filament while single-stranded (ss)DNA is stabiized in the filament's interior. The ATP-DnaA-oriC complex binds and stabilizes one strand of the AT-rich DNA unwinding element (DUE), permitting loading of DNA polymerase. After initiation quickly degrades to an ADP-DnaA complex that is not apt for DNA replication. Binds acidic phospholipids. This is Chromosomal replication initiator protein DnaA from Bacteroides fragilis (strain YCH46).